A 186-amino-acid polypeptide reads, in one-letter code: Testis-expressed protein 29 (186 aa).

Over 1–56 the chain is Extracellular; that stretch reads MKDTKEIKRSPPHLLKKFAVCDIPLYDICDYNVTRERCRSLDCCFYRGVCYEKAVP. Residues 57–77 form a helical membrane-spanning segment; the sequence is IYVQVFFTLIWFVAGAFIIAV. The Cytoplasmic segment spans residues 78 to 151; the sequence is IYRVIQGTKK…AGCCLWMKSK (74 aa). Disordered stretches follow at residues 104 to 138 and 151 to 186; these read SPTP…KTES and KPAK…QAAP. Residues 108–133 show a composition bias toward pro residues; that stretch reads ELIPEPIPEPIPEPIPEPIREPPPPV.

Its subcellular location is the membrane. In Mus musculus (Mouse), this protein is Testis-expressed protein 29 (Tex29).